The following is a 295-amino-acid chain: Large ribosomal subunit protein uL29m (295 aa).

Belongs to the universal ribosomal protein uL29 family. In terms of assembly, component of the mitochondrial large ribosomal subunit. Mature mitochondrial ribosomes consist of a small (37S) and a large (54S) subunit. The 37S subunit contains at least 33 different proteins and 1 molecule of RNA (15S). The 54S subunit contains at least 45 different proteins and 1 molecule of RNA (21S).

It is found in the mitochondrion. This is Large ribosomal subunit protein uL29m (MRPL4) from Meyerozyma guilliermondii (strain ATCC 6260 / CBS 566 / DSM 6381 / JCM 1539 / NBRC 10279 / NRRL Y-324) (Yeast).